We begin with the raw amino-acid sequence, 439 residues long: Glucose-1-phosphate adenylyltransferase (439 aa).

Alpha-D-glucose 1-phosphate-binding positions include Tyr116, Gly182, 197 to 198 (EK), and Ser215.

This sequence belongs to the bacterial/plant glucose-1-phosphate adenylyltransferase family. Homotetramer.

It carries out the reaction alpha-D-glucose 1-phosphate + ATP + H(+) = ADP-alpha-D-glucose + diphosphate. Its pathway is glycan biosynthesis; glycogen biosynthesis. Involved in the biosynthesis of ADP-glucose, a building block required for the elongation reactions to produce glycogen. Catalyzes the reaction between ATP and alpha-D-glucose 1-phosphate (G1P) to produce pyrophosphate and ADP-Glc. The sequence is that of Glucose-1-phosphate adenylyltransferase from Pasteurella multocida (strain Pm70).